Reading from the N-terminus, the 150-residue chain is Transcriptional repressor NrdR (150 aa).

A zinc finger spans residues 3–34 (CPFCGYEDTFVIDTREIEDQKVIRRRRECPNC). One can recognise an ATP-cone domain in the interval 49 to 139 (IMVIKKDGRR…VYQEFSSLEE (91 aa)).

Belongs to the NrdR family. It depends on Zn(2+) as a cofactor.

In terms of biological role, negatively regulates transcription of bacterial ribonucleotide reductase nrd genes and operons by binding to NrdR-boxes. The sequence is that of Transcriptional repressor NrdR from Dictyoglomus turgidum (strain DSM 6724 / Z-1310).